The chain runs to 454 residues: tRNA(Ile)-lysidine synthase (454 aa).

Residue 27 to 32 (SGGSDS) coordinates ATP.

Belongs to the tRNA(Ile)-lysidine synthase family.

Its subcellular location is the cytoplasm. The enzyme catalyses cytidine(34) in tRNA(Ile2) + L-lysine + ATP = lysidine(34) in tRNA(Ile2) + AMP + diphosphate + H(+). Ligates lysine onto the cytidine present at position 34 of the AUA codon-specific tRNA(Ile) that contains the anticodon CAU, in an ATP-dependent manner. Cytidine is converted to lysidine, thus changing the amino acid specificity of the tRNA from methionine to isoleucine. The chain is tRNA(Ile)-lysidine synthase from Mesorhizobium japonicum (strain LMG 29417 / CECT 9101 / MAFF 303099) (Mesorhizobium loti (strain MAFF 303099)).